The following is a 156-amino-acid chain: Small ribosomal subunit protein uS7 (156 aa).

The protein belongs to the universal ribosomal protein uS7 family. Part of the 30S ribosomal subunit. Contacts proteins S9 and S11.

Functionally, one of the primary rRNA binding proteins, it binds directly to 16S rRNA where it nucleates assembly of the head domain of the 30S subunit. Is located at the subunit interface close to the decoding center, probably blocks exit of the E-site tRNA. The sequence is that of Small ribosomal subunit protein uS7 from Methylobacterium nodulans (strain LMG 21967 / CNCM I-2342 / ORS 2060).